Consider the following 442-residue polypeptide: tRNA(Ile)-lysidine synthase (442 aa).

27 to 32 (SGGLDS) is a binding site for ATP.

This sequence belongs to the tRNA(Ile)-lysidine synthase family.

It localises to the cytoplasm. It catalyses the reaction cytidine(34) in tRNA(Ile2) + L-lysine + ATP = lysidine(34) in tRNA(Ile2) + AMP + diphosphate + H(+). Ligates lysine onto the cytidine present at position 34 of the AUA codon-specific tRNA(Ile) that contains the anticodon CAU, in an ATP-dependent manner. Cytidine is converted to lysidine, thus changing the amino acid specificity of the tRNA from methionine to isoleucine. The protein is tRNA(Ile)-lysidine synthase of Photorhabdus laumondii subsp. laumondii (strain DSM 15139 / CIP 105565 / TT01) (Photorhabdus luminescens subsp. laumondii).